Here is a 645-residue protein sequence, read N- to C-terminus: Rab11 family-interacting protein 5 (645 aa).

The C2 domain occupies 1–146 (MALVRDPEPA…AGRAQHTQWY (146 aa)). Phosphoserine occurs at positions 176, 283, 286, 307, 357, and 367. The tract at residues 271–299 (GAELLTRSPSHSSWLSTEGGRDSIQSPKL) is disordered. The span at 277-286 (RSPSHSSWLS) shows a compositional bias: polar residues. Residues 341–550 (SHVYNEEPQP…STALSSGLER (210 aa)) form a disordered region. The segment covering 357–374 (SISGPFPPSSSLHSVPPR) has biased composition (low complexity). Positions 375 to 387 (SSEEGSRSSDDSW) are enriched in basic and acidic residues. Phosphoserine occurs at positions 391 and 395. The segment covering 452 to 463 (RMGLFHHHHHQG) has biased composition (basic residues). 5 positions are modified to phosphoserine: Ser486, Ser530, Ser539, Ser545, and Ser640. One can recognise an FIP-RBD domain in the interval 578 to 640 (KDSAVLDQSA…ETSPTLLQIS (63 aa)).

In terms of assembly, interacts with RAB11FIP4. Interacts with NAPG. Interacts with RO60. Interacts with RAB11A that has been activated by GTP binding. Phosphorylated on serine and threonine residues. Phosphorylation at Ser-357 is PKA-dependent.

It localises to the cytoplasm. Its subcellular location is the recycling endosome membrane. The protein resides in the early endosome membrane. It is found in the golgi apparatus membrane. The protein localises to the cytoplasmic vesicle. It localises to the secretory vesicle membrane. Its subcellular location is the mitochondrion membrane. In terms of biological role, rab effector involved in protein trafficking from apical recycling endosomes to the apical plasma membrane. Involved in insulin granule exocytosis. May regulate V-ATPase intracellular transport in response to extracellular acidosis. The chain is Rab11 family-interacting protein 5 from Mus musculus (Mouse).